Here is a 291-residue protein sequence, read N- to C-terminus: Asialoglycoprotein receptor 1 (291 aa).

Basic and acidic residues predominate over residues 1-19 (MTKECQDLQHLDNEESDHH). The disordered stretch occupies residues 1-27 (MTKECQDLQHLDNEESDHHQLRKGPPP). The Cytoplasmic portion of the chain corresponds to 1-40 (MTKECQDLQHLDNEESDHHQLRKGPPPSQPLLQRLCSGPR). Positions 5-8 (CQDL) match the Endocytosis signal motif. Position 16 is a phosphoserine (Ser16). Residue Cys36 is the site of S-palmitoyl cysteine attachment. A helical; Signal-anchor for type II membrane protein membrane pass occupies residues 41–61 (LLLLSLGLSLLLLVVVCVIGS). Residues 61-123 (SQNSQLQKEL…KDLSEDHSSL (63 aa)) are a coiled coil. Residues 62–291 (QNSQLQKELR…DKASQEPPLL (230 aa)) are Extracellular-facing. N-linked (GlcNAc...) asparagine glycosylation is found at Asn79 and Asn147. Cystine bridges form between Cys154-Cys165, Cys182-Cys277, and Cys255-Cys269. The 118-residue stretch at 161–278 (HERSCYWFSR…CQRPYRWVCE (118 aa)) folds into the C-type lectin domain. 11 residues coordinate Ca(2+): Val191, Glu197, Asp216, Gln240, Asp242, Asp243, Glu253, Asp254, Asn265, Asp266, and Glu278. Position 285 is a phosphoserine (Ser285).

As to quaternary structure, interacts with LASS2. In terms of processing, phosphorylated on a cytoplasmic Ser residue.

It localises to the membrane. Functionally, mediates the endocytosis of plasma glycoproteins to which the terminal sialic acid residue on their complex carbohydrate moieties has been removed. The receptor recognizes terminal galactose and N-acetylgalactosamine units. After ligand binding to the receptor, the resulting complex is internalized and transported to a sorting organelle, where receptor and ligand are disassociated. The receptor then returns to the cell membrane surface. The sequence is that of Asialoglycoprotein receptor 1 (ASGR1) from Pongo abelii (Sumatran orangutan).